A 276-amino-acid polypeptide reads, in one-letter code: Radial spoke head protein 9 homolog (276 aa).

The protein belongs to the flagellar radial spoke RSP9 family. As to quaternary structure, component of the axonemal radial spoke 1 (RS1) and 2 (RS2) complexes, at least composed of spoke head proteins RSPH1, RSPH3, RSPH9 and the cilia-specific component RSPH4A or sperm-specific component RSPH6A, spoke stalk proteins RSPH14, DNAJB13, DYDC1, ROPN1L and NME5, and the RS1 complex-specific anchor protein IQUB. Interacts with IQUB. Interacts with RSPH3B. Interacts with RSPH4A. Interacts with RSPH6A. Interacts with CFAP61. Interacts with LRRC23.

It is found in the cytoplasm. The protein resides in the cytoskeleton. Its subcellular location is the cilium axoneme. It localises to the flagellum axoneme. The protein localises to the cell projection. It is found in the kinocilium. Its function is as follows. Functions as part of axonemal radial spoke complexes that play an important part in the motility of sperm and cilia. Essential for both the radial spoke head assembly and the central pair microtubule stability in ependymal motile cilia. Required for motility of olfactory and neural cilia and for the structural integrity of ciliary axonemes in both 9+0 and 9+2 motile cilia. The chain is Radial spoke head protein 9 homolog (RSPH9) from Bos taurus (Bovine).